Reading from the N-terminus, the 390-residue chain is Tuftelin (390 aa).

Coiled-coil stretches lie at residues 88 to 126 (DKMI…KLDR) and 162 to 351 (DTHI…IEKQ). Phosphoserine is present on Ser171.

Belongs to the tuftelin family. Interacts with TFIP11. Present in the extracellular enamel and is mainly associated with the crystal component.

The protein resides in the secreted. Its function is as follows. Involved in the structural organization of the epidermis. Involved in the mineralization and structural organization of enamel. In Bos taurus (Bovine), this protein is Tuftelin (TUFT1).